A 560-amino-acid chain; its full sequence is uncharacterized protein (560 aa).

A DNA-binding region (zn(2)-C6 fungal-type) is located at residues 18 to 44; it reads CLRCRRRKVKCDRQYPCSRCKESEESC. Residues 60 to 80 form a disordered region; sequence LSRPITRETDSSAHQETRTRL. Residues 64 to 80 show a composition bias toward basic and acidic residues; that stretch reads ITRETDSSAHQETRTRL. The chain crosses the membrane as a helical span at residues 182–202; the sequence is FATSIILIVTAIAVALSLESF.

It localises to the nucleus membrane. This is an uncharacterized protein from Schizosaccharomyces pombe (strain 972 / ATCC 24843) (Fission yeast).